Here is a 95-residue protein sequence, read N- to C-terminus: Gas vesicle protein S (95 aa).

Belongs to the gas vesicle GvpA family.

The protein localises to the gas vesicle. Probably a minor component of the gas vesicle. It is not clear what function gas vesicles perform in soil bacteria. Functionally, when a minimal gvp locus (gvpA2-gvpR-gvpN-gvpF-gvpG-gvpL-gvpS-gvpK-gvpJ-gvpT-gvpU, called pNL29) is expressed in E.coli gas vesicles are made. This Priestia megaterium (Bacillus megaterium) protein is Gas vesicle protein S.